Consider the following 283-residue polypeptide: Short-chain dehydrogenase cctT (283 aa).

The first 20 residues, 1 to 20 (MLKTVLITGCSHGGLGAAMA), serve as a signal peptide directing secretion. Residues Ile7, Thr33, Lys39, Glu55, and Asn83 each contribute to the NADP(+) site. N-linked (GlcNAc...) asparagine glycosylation is present at Asn131. The active-site Proton donor is the Ser133. The NADP(+) site is built by Tyr147, Arg151, Val180, and Thr182. The active-site Proton acceptor is Tyr147.

This sequence belongs to the short-chain dehydrogenases/reductases (SDR) family.

In terms of biological role, short-chain dehydrogenase; part of the gene cluster that mediates the biosynthesis of the mycotoxin cyclochlorotine, a hepatotoxic and carcinogenic cyclic chlorinated pentapeptide. The function of cctT within the pathway, if any, remains undetermined. The NRPS cctN initially catalyzes the condensation of L-serine (Ser), Pro, L-2-aminobutyrate (2Abu), Ser, and beta-Phe in this order to produce isocyclotine. After the dichlorination of Pro2 catalyzed by cctP2 to produce isocyclochlorotine, the cctO-mediated transacylation of isocyclochlorotine can furnish cyclochlorotine. The subsequent hydroxylation of cyclochlorotine by cctR yields hydroxycyclochlorotine as the final product. CctP1 probably acts as a phenylalanine aminomutase and provides the uncommon building block beta-Phe. Furthermore, 2Abu can be synthesized from threonine by one of the threonine dehydratases and transaminases localized outside of the cluster. The functions of the remaining proteins encoded by the cluster, cctM and cctT, have not been identified yet. The polypeptide is Short-chain dehydrogenase cctT (Talaromyces islandicus (Penicillium islandicum)).